The sequence spans 133 residues: Ribonuclease P protein component (133 aa).

This sequence belongs to the RnpA family. In terms of assembly, consists of a catalytic RNA component (M1 or rnpB) and a protein subunit.

The enzyme catalyses Endonucleolytic cleavage of RNA, removing 5'-extranucleotides from tRNA precursor.. RNaseP catalyzes the removal of the 5'-leader sequence from pre-tRNA to produce the mature 5'-terminus. It can also cleave other RNA substrates such as 4.5S RNA. The protein component plays an auxiliary but essential role in vivo by binding to the 5'-leader sequence and broadening the substrate specificity of the ribozyme. This Pseudomonas savastanoi pv. phaseolicola (strain 1448A / Race 6) (Pseudomonas syringae pv. phaseolicola (strain 1448A / Race 6)) protein is Ribonuclease P protein component.